The primary structure comprises 704 residues: ATP-dependent DNA helicase Hel308 (704 aa).

ATP contacts are provided by residues Gln31 and 49–56 (SPTASGKT). One can recognise a Helicase ATP-binding domain in the interval 36–200 (RKGLLDGKRL…WLNAELVATN (165 aa)). Residues 148–151 (DEFH) carry the DEAH box motif. In terms of domain architecture, Helicase C-terminal spans 235–439 (AIIAYTLDIV…AFYSFLISII (205 aa)). The binds Hjc stretch occupies residues 366-645 (VVGYMDLIPV…LHARVKDGVK (280 aa)). Residues 432–644 (YSFLISIIAS…ELHARVKDGV (213 aa)) are required for helicase activity. Positions 646-704 (PELIELVKIPGIGRVRARLLYQHDIKKPEDIVLNPEKVKQLLGPNLGEKIVREAARTIA) are inhibits intrinsic ATPase, and helicase.

It belongs to the helicase family. Hel308 subfamily. As to quaternary structure, monomer; forms a 1:2 complex with Hjc, which may form a complex with Holliday junction DNA. Mg(2+) serves as cofactor.

The enzyme catalyses Couples ATP hydrolysis with the unwinding of duplex DNA by translocating in the 3'-5' direction.. The catalysed reaction is ATP + H2O = ADP + phosphate + H(+). It catalyses the reaction Couples ATP hydrolysis with the unwinding of duplex DNA at the replication fork by translocating in the 5'-3' direction. This creates two antiparallel DNA single strands (ssDNA). The leading ssDNA polymer is the template for DNA polymerase III holoenzyme which synthesizes a continuous strand.. Helicase activity is inhibited by Hjc and by PCNA123 and PCNA323. An ATP, Mg(2+)-dependent DNA 3'-5' and 5'-3' helicase that may be involved in repair of stalled replication forks. Stimulated by both ss and dsDNA. Unwinds both leading and lagging strands in replication fork structures, unlike orthologs in P.furiosus and M.thermautotrophicus which only unwind the lagging strand and only have 3'-5' helicase activity. Preferentially binds dsDNA with overhangs or branched DNA. Able to anneal DNA substrates that could form a replication fork-like structure, has replication fork reversal activity (at least in vitro). The polypeptide is ATP-dependent DNA helicase Hel308 (Sulfurisphaera tokodaii (strain DSM 16993 / JCM 10545 / NBRC 100140 / 7) (Sulfolobus tokodaii)).